A 201-amino-acid polypeptide reads, in one-letter code: Small ribosomal subunit protein uS10m (201 aa).

This sequence belongs to the universal ribosomal protein uS10 family. Component of the mitochondrial ribosome small subunit (28S) which comprises a 12S rRNA and about 30 distinct proteins.

Its subcellular location is the mitochondrion. The sequence is that of Small ribosomal subunit protein uS10m (MRPS10) from Pongo abelii (Sumatran orangutan).